A 433-amino-acid chain; its full sequence is Pyrimidine-nucleoside phosphorylase (433 aa).

81-83 (KHS) is a phosphate binding site. K(+) is bound by residues Gly-88 and Thr-90. Phosphate-binding positions include Thr-92, 108 to 110 (KMS), and Thr-120. 2 residues coordinate substrate: Arg-168 and Lys-187. K(+) is bound by residues Leu-243, Ala-246, and Glu-255.

This sequence belongs to the thymidine/pyrimidine-nucleoside phosphorylase family. As to quaternary structure, homodimer. It depends on K(+) as a cofactor.

It carries out the reaction uridine + phosphate = alpha-D-ribose 1-phosphate + uracil. It catalyses the reaction thymidine + phosphate = 2-deoxy-alpha-D-ribose 1-phosphate + thymine. The catalysed reaction is 2'-deoxyuridine + phosphate = 2-deoxy-alpha-D-ribose 1-phosphate + uracil. Functionally, catalyzes phosphorolysis of the pyrimidine nucleosides uridine, thymidine and 2'-deoxyuridine with the formation of the corresponding pyrimidine base and ribose-1-phosphate. The polypeptide is Pyrimidine-nucleoside phosphorylase (pdp) (Staphylococcus aureus (strain bovine RF122 / ET3-1)).